The sequence spans 561 residues: Asparagine synthetase [glutamine-hydrolyzing] (561 aa).

Residue cysteine 2 is the For GATase activity of the active site. Residues cysteine 2 to lysine 191 form the Glutamine amidotransferase type-2 domain. Residues arginine 49 to valine 53, asparagine 75 to glutamate 77, and aspartate 97 contribute to the L-glutamine site. An Asparagine synthetase domain is found at histidine 213 to tyrosine 536. ATP-binding positions include leucine 256, isoleucine 288, and serine 363–glycine 364. Lysine 385 is subject to N6-acetyllysine. Threonine 545 is subject to Phosphothreonine. Position 557 is a phosphoserine (serine 557).

The enzyme catalyses L-aspartate + L-glutamine + ATP + H2O = L-asparagine + L-glutamate + AMP + diphosphate + H(+). It participates in amino-acid biosynthesis; L-asparagine biosynthesis; L-asparagine from L-aspartate (L-Gln route): step 1/1. This Pongo abelii (Sumatran orangutan) protein is Asparagine synthetase [glutamine-hydrolyzing] (ASNS).